Consider the following 468-residue polypeptide: MRNFNSPKFGHSMGDDSDDDDFDSGTEPEFLVEPYVLEEFPITEEIEEIEGDDEEYNPNEEIGTSSSDDEDDSDDSDSDKEQENGGEDGEDSSTTNTVPKRVIDDYDEDMEEDEVIKAIITEIKKPRSKPPDIKTEDFVTDLCFHPDQDLLAVGTTTGDVIVYKFTNDECTIVNTHETHTKSVRDVEFNADGDLLISTARDRSIMVTDVETGKLKRFWDDAHEEPVYTMSMITEHTFATGDDGGVLKLWDLRQKDPVFKLKEVEDFISCIITNEQKKYLLMTSGDGYLTTINIPQRKMYVQSEPYEEELTCMGVFRRDSKLVVGSSKGNFYTFNWGQFGYHCDAFIGPKAGVNKMVPITERIAVTGGEDGILRAMHLVPGRVLGIVGQHSLAVETMDINSTGELIASSSHDNDIRFWNIKYFEEFDDIKYNSKPDKKAMTHNLPSSKQTNAADFFSGLAGDQSGAEGD.

Positions 1-107 (MRNFNSPKFG…VPKRVIDDYD (107 aa)) are disordered. Composition is skewed to acidic residues over residues 15-26 (DDSDDDDFDSGT), 41-58 (PITE…EYNP), and 67-91 (SDDE…DGED). 6 WD repeats span residues 134–173 (KTED…CTIV), 178–217 (THTK…LKRF), 221–259 (AHEE…PVFK), 262–301 (EVED…MYVQ), 304–343 (PYEE…YHCD), and 388–427 (QHSL…EFDD).

It belongs to the WD repeat WDR55 family.

The protein is WD repeat-containing protein 55 homolog of Aedes aegypti (Yellowfever mosquito).